The sequence spans 497 residues: Di-/tripeptide transporter (497 aa).

At 1–36 (MQNLNKTEKTFFGQPRGLLTLFQTEFWERFSYYGMR) the chain is on the cytoplasmic side. Residues 37–55 (AILVYYLYALTTADNAGLG) form a helical membrane-spanning segment. The Extracellular segment spans residues 56 to 64 (LPKAQAMAI). The chain crosses the membrane as a helical span at residues 65 to 83 (VSIYGALVYLSTIVGGWVA). Over 84-92 (DRLLGASRT) the chain is Cytoplasmic. Residues 93–111 (IFLGGILITLGHVALATPF) traverse the membrane as a helical segment. The Extracellular portion of the chain corresponds to 112 to 115 (GLSS). Residues 116–134 (LFVALFLIILGTGMLKPNI) traverse the membrane as a helical segment. Over 135-154 (SNMVGHLYSKDDSRRDTGFN) the chain is Cytoplasmic. The helical transmembrane segment at 155–173 (IFVVGINMGSLIAPLIVGT) threads the bilayer. The Extracellular portion of the chain corresponds to 174–181 (VGQGVNYH). Residues 182 to 200 (LGFSLAAIGMIFALFAYWY) form a helical membrane-spanning segment. The Cytoplasmic segment spans residues 201-224 (GRLRHFPEIGREPSNPMDAKAKRN). Residues 225–243 (FIITLTIVLIVALIGFFLI) traverse the membrane as a helical segment. Residues 244 to 254 (YQASPANFINN) are Extracellular-facing. A helical membrane pass occupies residues 255–273 (FINVLSIIGIVVPIIYFVM). At 274 to 293 (MFTSKKVESDERRKLTAYIP) the chain is on the cytoplasmic side. Residues 294–312 (LFLSAIVFWAIEEQSSTII) form a helical membrane-spanning segment. The Extracellular portion of the chain corresponds to 313 to 335 (AVWGESRSNLNPTWFGFTFHIDP). Residues 336–354 (SWYQLLNPLFIVLLSPIFV) traverse the membrane as a helical segment. Residues 355–372 (RIWNKLGDRQPSTIVKFG) are Cytoplasmic-facing. Residues 373–391 (LGLMLTGASYLIMTLPGLL) traverse the membrane as a helical segment. The Extracellular portion of the chain corresponds to 392 to 425 (NGTSGRASALWLVLMFAVQMAGELLVSPVGLSVS). The helical transmembrane segment at 426-444 (TKLAPVAFQSQMMAMWFLA) threads the bilayer. Over 445–497 (DSTSQAINAQITPIFKAATEVHFFAITGIIGIIVGIILLIIKKPILKLMGDVR) the chain is Cytoplasmic.

The protein belongs to the major facilitator superfamily. Proton-dependent oligopeptide transporter (POT/PTR) (TC 2.A.17) family.

The protein resides in the cell membrane. Proton-dependent uptake of di- or tri-peptides. This chain is Di-/tripeptide transporter (dtpT), found in Lactococcus lactis subsp. cremoris (Streptococcus cremoris).